The sequence spans 343 residues: Probable dual-specificity RNA methyltransferase RlmN (343 aa).

Glutamate 93 serves as the catalytic Proton acceptor. The 222-residue stretch at 99–320 (TDDRATLCVS…NAKGVVCTIR (222 aa)) folds into the Radical SAM core domain. Residues cysteine 106 and cysteine 331 are joined by a disulfide bond. Cysteine 113, cysteine 117, and cysteine 120 together coordinate [4Fe-4S] cluster. S-adenosyl-L-methionine contacts are provided by residues 158-159 (GE), serine 190, 212-214 (SLH), and histidine 288. Cysteine 331 functions as the S-methylcysteine intermediate in the catalytic mechanism.

It belongs to the radical SAM superfamily. RlmN family. [4Fe-4S] cluster serves as cofactor.

It is found in the cytoplasm. The enzyme catalyses adenosine(2503) in 23S rRNA + 2 reduced [2Fe-2S]-[ferredoxin] + 2 S-adenosyl-L-methionine = 2-methyladenosine(2503) in 23S rRNA + 5'-deoxyadenosine + L-methionine + 2 oxidized [2Fe-2S]-[ferredoxin] + S-adenosyl-L-homocysteine. The catalysed reaction is adenosine(37) in tRNA + 2 reduced [2Fe-2S]-[ferredoxin] + 2 S-adenosyl-L-methionine = 2-methyladenosine(37) in tRNA + 5'-deoxyadenosine + L-methionine + 2 oxidized [2Fe-2S]-[ferredoxin] + S-adenosyl-L-homocysteine. Specifically methylates position 2 of adenine 2503 in 23S rRNA and position 2 of adenine 37 in tRNAs. This is Probable dual-specificity RNA methyltransferase RlmN from Parabacteroides distasonis (strain ATCC 8503 / DSM 20701 / CIP 104284 / JCM 5825 / NCTC 11152).